The primary structure comprises 244 residues: 7-cyano-7-deazaguanine synthase (244 aa).

An ATP-binding site is contributed by 14–24; sequence FSGGQDSATCV. Zn(2+)-binding residues include Cys202, Cys217, Cys220, and Cys223.

Belongs to the QueC family. Zn(2+) serves as cofactor.

It catalyses the reaction 7-carboxy-7-deazaguanine + NH4(+) + ATP = 7-cyano-7-deazaguanine + ADP + phosphate + H2O + H(+). The protein operates within purine metabolism; 7-cyano-7-deazaguanine biosynthesis. Its function is as follows. Catalyzes the ATP-dependent conversion of 7-carboxy-7-deazaguanine (CDG) to 7-cyano-7-deazaguanine (preQ(0)). The sequence is that of 7-cyano-7-deazaguanine synthase from Burkholderia mallei (strain NCTC 10229).